A 354-amino-acid chain; its full sequence is MTELKNDRYLRALLRQPVDVTPVWMMRQAGRYLPEYNATRAQAGNFIALCKNAELACEVTLQPLRRFPLDAAILFSDILTVPDAMGLGLYFETGEGPRFTHSVTCHADIQRLPIPDPEQELGYVMDAVRTIRRSLRGDVPLIGFSGSPWTLATYMVEGGSSKAFTKIKKVMFSDPAALHLLLDKLAQSVILYLNAQIRAGAQAVMIFDTWGGVLTGRDYREFSLRYMHQIVDGLQRESEGRRVPVTLFTKGGGQWLEAMADTGCDALGLDWTCDIADARRRVGGRVALQGNMDPSLLYAPPARIEQEVETILAGFGQGEGHICNLGHGIHPDVPPKHAGVFVDAVHRLSVPYHR.

Residues 27-31 (RQAGR), Asp-77, Tyr-154, Thr-209, and His-327 each bind substrate.

It belongs to the uroporphyrinogen decarboxylase family. As to quaternary structure, homodimer.

Its subcellular location is the cytoplasm. It carries out the reaction uroporphyrinogen III + 4 H(+) = coproporphyrinogen III + 4 CO2. The protein operates within porphyrin-containing compound metabolism; protoporphyrin-IX biosynthesis; coproporphyrinogen-III from 5-aminolevulinate: step 4/4. Functionally, catalyzes the decarboxylation of four acetate groups of uroporphyrinogen-III to yield coproporphyrinogen-III. In Edwardsiella ictaluri (strain 93-146), this protein is Uroporphyrinogen decarboxylase.